The following is a 361-amino-acid chain: Phosphoserine aminotransferase (361 aa).

R43 is a binding site for L-glutamate. Pyridoxal 5'-phosphate contacts are provided by residues 77–78 (AS), W103, T153, D173, and Q196. K197 carries the post-translational modification N6-(pyridoxal phosphate)lysine. 238-239 (NT) serves as a coordination point for pyridoxal 5'-phosphate.

Belongs to the class-V pyridoxal-phosphate-dependent aminotransferase family. SerC subfamily. In terms of assembly, homodimer. Requires pyridoxal 5'-phosphate as cofactor.

It is found in the cytoplasm. The catalysed reaction is O-phospho-L-serine + 2-oxoglutarate = 3-phosphooxypyruvate + L-glutamate. The enzyme catalyses 4-(phosphooxy)-L-threonine + 2-oxoglutarate = (R)-3-hydroxy-2-oxo-4-phosphooxybutanoate + L-glutamate. It functions in the pathway amino-acid biosynthesis; L-serine biosynthesis; L-serine from 3-phospho-D-glycerate: step 2/3. The protein operates within cofactor biosynthesis; pyridoxine 5'-phosphate biosynthesis; pyridoxine 5'-phosphate from D-erythrose 4-phosphate: step 3/5. Its function is as follows. Catalyzes the reversible conversion of 3-phosphohydroxypyruvate to phosphoserine and of 3-hydroxy-2-oxo-4-phosphonooxybutanoate to phosphohydroxythreonine. In Pseudomonas entomophila (strain L48), this protein is Phosphoserine aminotransferase.